The following is a 219-amino-acid chain: MAIFSVYVVNKAGGLIYQWDSYSPRAEAEKTFSYPLDLLLKLHDERVLVAFGQRDGIRVGHAVLAINGMDVNGKYTADGKEVLEYLGNPANYPVSIRFGRPRLTSNEKLMLASMFHSLFAIGSQLSPEQGSSGIEMLETDTFKLHCFQTLTGIKFVVLADPRQAGIDSLLRKIYEIYSDFALKNPFYSLEMPIRCELFDQNLKLALEVAEKAGTFGPGS.

It belongs to the TRAPP small subunits family. TRAPPC4 subfamily. In terms of assembly, component of the multisubunit TRAPP (transport protein particle) complex, which includes at least TRAPPC2, TRAPPC2L, TRAPPC3, TRAPPC3L, TRAPPC4, TRAPPC5, TRAPPC8, TRAPPC9, TRAPPC10, TRAPPC11 and TRAPPC12. Interacts with SDC2. As to expression, widely expressed.

The protein localises to the postsynaptic cell membrane. It is found in the golgi apparatus membrane. It localises to the endoplasmic reticulum. The protein resides in the vesicle. Functionally, core component of the TRAPP complexes which has a function of guanine nucleotide exchange factor activity for Rab1 GTPase. Plays a role in vesicular transport from endoplasmic reticulum to Golgi and autophagy. May play a role in dendrite postsynaptic membrane trafficking. The chain is Trafficking protein particle complex subunit 4 from Mus musculus (Mouse).